Here is a 327-residue protein sequence, read N- to C-terminus: RPDRSHAKSARSVAETMGNYHPHGDASIYDTLVRMAQPWSMRYPLVDGQGNFGSPGNDPPAAMRYCITGDALVALPEGESVRIADIVPGARPNSDNAIDLKVLDRHGNPVLADRLFHSGEHPVYTVRTVEGLRVTGTANHPLLCLVDVAGVPTLLWKLIDEIKPGDYAVIQRSAFSVDCAGFARGKPEFAPTTYTVGVPGLVRFLEAHHRDPDAQAIADELTDGRFYYAKVASVTDAGVQPVYSLRVDTADHAFITNGFVSHNTEAPLTPLAMEMLREIDEETVDFIPNYDGRVQEPTVLPSRFPNLLANGSGGIAVGMATNIPPHN.

One can recognise a Topo IIA-type catalytic domain in the interval 1–327; it reads RPDRSHAKSA…GMATNIPPHN (327 aa). The active-site O-(5'-phospho-DNA)-tyrosine intermediate is Y65.

It belongs to the type II topoisomerase GyrA/ParC subunit family. As to quaternary structure, heterotetramer, composed of two GyrA and two GyrB chains. In the heterotetramer, GyrA contains the active site tyrosine that forms a transient covalent intermediate with DNA, while GyrB binds cofactors and catalyzes ATP hydrolysis. This protein undergoes a protein self splicing that involves a post-translational excision of the intervening region (intein) followed by peptide ligation.

It localises to the cytoplasm. It catalyses the reaction ATP-dependent breakage, passage and rejoining of double-stranded DNA.. Its function is as follows. A type II topoisomerase that negatively supercoils closed circular double-stranded (ds) DNA in an ATP-dependent manner to modulate DNA topology and maintain chromosomes in an underwound state. Negative supercoiling favors strand separation, and DNA replication, transcription, recombination and repair, all of which involve strand separation. Also able to catalyze the interconversion of other topological isomers of dsDNA rings, including catenanes and knotted rings. Type II topoisomerases break and join 2 DNA strands simultaneously in an ATP-dependent manner. The polypeptide is DNA gyrase subunit A (gyrA) (Mycobacterium xenopi).